The sequence spans 200 residues: Protein GrpE (200 aa).

Positions 1–10 (MQEKDSKDVT) are enriched in basic and acidic residues. Residues 1-57 (MQEKDSKDVTMEDEETIASQEEIEVEGNSEESSKEEESNNSEISDENLSEENLKLKD) are disordered. Residues 11-29 (MEDEETIASQEEIEVEGNS) are compositionally biased toward acidic residues.

This sequence belongs to the GrpE family. Homodimer.

The protein localises to the cytoplasm. In terms of biological role, participates actively in the response to hyperosmotic and heat shock by preventing the aggregation of stress-denatured proteins, in association with DnaK and GrpE. It is the nucleotide exchange factor for DnaK and may function as a thermosensor. Unfolded proteins bind initially to DnaJ; upon interaction with the DnaJ-bound protein, DnaK hydrolyzes its bound ATP, resulting in the formation of a stable complex. GrpE releases ADP from DnaK; ATP binding to DnaK triggers the release of the substrate protein, thus completing the reaction cycle. Several rounds of ATP-dependent interactions between DnaJ, DnaK and GrpE are required for fully efficient folding. This is Protein GrpE from Clostridium acetobutylicum (strain ATCC 824 / DSM 792 / JCM 1419 / IAM 19013 / LMG 5710 / NBRC 13948 / NRRL B-527 / VKM B-1787 / 2291 / W).